Reading from the N-terminus, the 229-residue chain is Probable U3 small nucleolar RNA-associated protein 11 (229 aa).

Disordered regions lie at residues 1-23 (MSSL…ESRK) and 199-229 (KKPG…QRKR).

This sequence belongs to the UTP11 family. In terms of assembly, component of the ribosomal small subunit (SSU) processome.

Its subcellular location is the nucleus. The protein resides in the nucleolus. In terms of biological role, involved in nucleolar processing of pre-18S ribosomal RNA. This chain is Probable U3 small nucleolar RNA-associated protein 11, found in Oryza sativa subsp. japonica (Rice).